A 145-amino-acid chain; its full sequence is Small ribosomal subunit protein uS12 (145 aa).

Pro-64 is modified (hydroxyproline).

It belongs to the universal ribosomal protein uS12 family.

The protein is Small ribosomal subunit protein uS12 (rps23) of Aspergillus fumigatus (strain ATCC MYA-4609 / CBS 101355 / FGSC A1100 / Af293) (Neosartorya fumigata).